We begin with the raw amino-acid sequence, 310 residues long: Protein-methionine-sulfoxide reductase catalytic subunit MsrP (310 aa).

A signal peptide (tat-type signal) is located at residues 1-45; sequence MRKTSSPRIAPSEITPRDLYHDRRRFMQAAAGAAAAALWPHWLSA. Residues asparagine 73, 76–77, cysteine 131, threonine 166, asparagine 214, arginine 219, and 230–232 each bind Mo-molybdopterin; these read YE and SAK.

This sequence belongs to the MsrP family. As to quaternary structure, heterodimer of a catalytic subunit (MsrP) and a heme-binding subunit (MsrQ). It depends on Mo-molybdopterin as a cofactor. Predicted to be exported by the Tat system. The position of the signal peptide cleavage has not been experimentally proven.

It localises to the periplasm. It carries out the reaction L-methionyl-[protein] + a quinone + H2O = L-methionyl-(S)-S-oxide-[protein] + a quinol. The catalysed reaction is L-methionyl-[protein] + a quinone + H2O = L-methionyl-(R)-S-oxide-[protein] + a quinol. Functionally, part of the MsrPQ system that repairs oxidized periplasmic proteins containing methionine sulfoxide residues (Met-O), using respiratory chain electrons. Thus protects these proteins from oxidative-stress damage caused by reactive species of oxygen and chlorine generated by the host defense mechanisms. MsrPQ is essential for the maintenance of envelope integrity under bleach stress, rescuing a wide series of structurally unrelated periplasmic proteins from methionine oxidation. The catalytic subunit MsrP is non-stereospecific, being able to reduce both (R-) and (S-) diastereoisomers of methionine sulfoxide. The sequence is that of Protein-methionine-sulfoxide reductase catalytic subunit MsrP from Methylococcus capsulatus (strain ATCC 33009 / NCIMB 11132 / Bath).